An 867-amino-acid polypeptide reads, in one-letter code: Protein argonaute-3 (867 aa).

The segment at Met1–Thr83 is necessary and sufficient for interaction with krimp. The interval Met1–Gln289 is interaction with papi. A symmetric dimethylarginine mark is found at Arg4, Arg68, and Arg70. A PAZ domain is found at Thr291 to Gly402. The Piwi domain maps to Met566–Gln853.

This sequence belongs to the argonaute family. Piwi subfamily. As to quaternary structure, component of the ping-pong piRNA processing (4P) complex consisting of krimp, aub and AGO3. Interacts (via N-terminus when not methylated on arginine residues) with krimp (via non-canonical tudor domain); this interaction leads to symmetrical dimethylation on AGO3 arginine residues and its subsequent dissociation from krimp. Krimp associated AGO3 is mostly free of piRNA binding and the interaction plays an important role in the loading of AGO3 with piRNAs; piRNA binding may stimulate dissociation of the two proteins. May form part of a piRNA processing complex consisting of tud, aub and AGO3. Interacts (when symmetrically dimethylated on arginine residues) with tud. Forms a complex with smg, twin, aub, nos mRNA and piRNAs that target the nos 3'-untranslated region, in early embryos. Interacts (via the N-terminal region when symmetrically methylated on arginine residues) with papi (via C-terminus); this interaction is RNA-independent and may be required for AGO3 localization to the nuage. Interacts with TER94 and tral. Symmetrically dimethylated on Arg-4, Arg-68 and Arg-70, most likely by csul/PRMT5/DART5. Methylation state probably functions as an indicator of its piRNA binding state. In ovary, expressed in germline stem cells, germline cyst cells, nurse cells and oocytes during early stages. Also found in the somatic cap cells of the germarium. In testis, expressed in germline stem cells, primary gonial cells and early spermatocytes. No expression detected in the somatic hub cells at the apical tip of the testis (at protein level). Expressed in neurons throughout the adult brain and in the mushroom body subdivision in the peduncle. In the mushroom body, expressed only in gamma and core alpha-beta neurons.

The protein resides in the cytoplasm. It localises to the perinuclear region. Its subcellular location is the cytoplasmic ribonucleoprotein granule. In terms of biological role, component of the perinuclear meiotic nuage, a germline-specific subcellular membraneless ribonucleoprotein compartment involved in production of transposable element-repressing Piwi-interacting RNA (piRNA)-induced silencing complexes (piRISCs), which are essential for maintaining germline integrity during oogenesis. Acts via the Piwi-interacting RNA (piRNA) metabolic process, which mediates the repression of transposable elements during meiosis by forming complexes composed of piRNAs and Piwi proteins and governs the methylation and subsequent repression of transposons. Piwi protein that directly binds piRNAs, a class of 24 to 30 nucleotide RNAs that are generated by a Dicer-independent mechanism and are primarily derived from transposons and other repeated sequence elements. Associates predominantly with sense piRNAs that contain adenine at nucleotide 10, but shows no preference for uridine at the 5' end. Shows RNA cleavage or slicer activity. Together with Piwi protein aub recruited to subregions of the perinuclear nuage by krimp, which coordinates their activity in the ping-pong amplification step of secondary piRNA biogenesis. Krimp recruits piRNA bound aub and unbound AGO3, bringing them into close proximity to facilitate the loading onto AGO3 of freshly cut piRNAs generated by aub cleavage of target sequences; krimp recognizes the piRNA loading state of the Piwi proteins via symmetrically dimethylated arginine modification in their N-terminus. Important for asymmetric ping-pong amplification to bias production towards antisense piRNAs capable of silencing transposable elements. In testis, associates with Su(Ste) and AT-chX-1 piRNAs mostly produced from antisense precursors. In the germline, acts to amplify pools of antisense piRNAs, among others Su(Ste), AT-chX-1 and roo, and to limit sense piRNA accumulation. Forms a complex with smg, twin, aub and specific piRNAs that targets nos mRNA (and probably other maternal mRNAS) for deadenylation promoting its decay during early embryogenesis. Involved in transposon silencing in the adult brain. In Drosophila melanogaster (Fruit fly), this protein is Protein argonaute-3.